The primary structure comprises 223 residues: UPF0441 protein YgiB (223 aa).

Positions 201 to 223 are disordered; it reads ESVAKQSAMQRSAAGTSTRSMGG. Over residues 204-223 the composition is skewed to polar residues; sequence AKQSAMQRSAAGTSTRSMGG.

The protein belongs to the UPF0441 family.

The sequence is that of UPF0441 protein YgiB from Salmonella arizonae (strain ATCC BAA-731 / CDC346-86 / RSK2980).